The chain runs to 233 residues: Triosephosphate isomerase (233 aa).

8–10 (NWK) is a binding site for substrate. The active-site Electrophile is histidine 91. The active-site Proton acceptor is glutamate 155. 2 residues coordinate substrate: glycine 161 and serine 192.

This sequence belongs to the triosephosphate isomerase family. In terms of assembly, homodimer.

It is found in the cytoplasm. It carries out the reaction D-glyceraldehyde 3-phosphate = dihydroxyacetone phosphate. Its pathway is carbohydrate biosynthesis; gluconeogenesis. It functions in the pathway carbohydrate degradation; glycolysis; D-glyceraldehyde 3-phosphate from glycerone phosphate: step 1/1. Involved in the gluconeogenesis. Catalyzes stereospecifically the conversion of dihydroxyacetone phosphate (DHAP) to D-glyceraldehyde-3-phosphate (G3P). The sequence is that of Triosephosphate isomerase from Wolbachia sp. subsp. Brugia malayi (strain TRS).